A 203-amino-acid polypeptide reads, in one-letter code: Holliday junction branch migration complex subunit RuvA (203 aa).

Residues 1–64 form a domain I region; the sequence is MIGRLRGIIL…EDAQLLYGFN (64 aa). The segment at 65–142 is domain II; it reads NKQERTLFKE…KGLHGDLFTP (78 aa). The segment at 143 to 154 is flexible linker; sequence AVDLVLTSPASP. A domain III region spans residues 155–203; the sequence is TSEDAEQEAVAALVALGYKPQEASRMVNKIARPDASSETLIRDALRAAL.

Belongs to the RuvA family. As to quaternary structure, homotetramer. Forms an RuvA(8)-RuvB(12)-Holliday junction (HJ) complex. HJ DNA is sandwiched between 2 RuvA tetramers; dsDNA enters through RuvA and exits via RuvB. An RuvB hexamer assembles on each DNA strand where it exits the tetramer. Each RuvB hexamer is contacted by two RuvA subunits (via domain III) on 2 adjacent RuvB subunits; this complex drives branch migration. In the full resolvosome a probable DNA-RuvA(4)-RuvB(12)-RuvC(2) complex forms which resolves the HJ.

It localises to the cytoplasm. In terms of biological role, the RuvA-RuvB-RuvC complex processes Holliday junction (HJ) DNA during genetic recombination and DNA repair, while the RuvA-RuvB complex plays an important role in the rescue of blocked DNA replication forks via replication fork reversal (RFR). RuvA specifically binds to HJ cruciform DNA, conferring on it an open structure. The RuvB hexamer acts as an ATP-dependent pump, pulling dsDNA into and through the RuvAB complex. HJ branch migration allows RuvC to scan DNA until it finds its consensus sequence, where it cleaves and resolves the cruciform DNA. This Salmonella choleraesuis (strain SC-B67) protein is Holliday junction branch migration complex subunit RuvA.